The chain runs to 320 residues: MERTNDSTSTEFFLVGLSAHPKLQTVFFVLILWMYLMILLGNGVLISVIIFDSHLHTPMYFFLCNLSFLDVCYTSSSVPLILASFLAVKKKVSFSGCMVQMFISFAMGATECMILGTMALDRYVAICYPLRYPVIMSKGAYVAMAAGSWVTGLVDSVVQTAFAMQLPFCANNVIKHFVCEILAILKLACADISINVISMTGSNLIVLVIPLLVISISYIFIVATILRIPSTEGKHKAFSTCSAHLTVVIIFYGTIFFMYAKPESKASVDSGNEDIIEALISLFYGVMTPMLNPLIYSLRNKDVKAAVKNILCRKNFSDGK.

Residues 1 to 25 (MERTNDSTSTEFFLVGLSAHPKLQT) are Extracellular-facing. N-linked (GlcNAc...) asparagine glycosylation is present at Asn-5. Residues 26-46 (VFFVLILWMYLMILLGNGVLI) traverse the membrane as a helical segment. Residues 47–54 (SVIIFDSH) are Cytoplasmic-facing. A helical transmembrane segment spans residues 55-75 (LHTPMYFFLCNLSFLDVCYTS). Residues 76–99 (SSVPLILASFLAVKKKVSFSGCMV) lie on the Extracellular side of the membrane. A disulfide bond links Cys-97 and Cys-189. Residues 100–120 (QMFISFAMGATECMILGTMAL) traverse the membrane as a helical segment. Over 121–139 (DRYVAICYPLRYPVIMSKG) the chain is Cytoplasmic. Residues 140–160 (AYVAMAAGSWVTGLVDSVVQT) form a helical membrane-spanning segment. Residues 161 to 197 (AFAMQLPFCANNVIKHFVCEILAILKLACADISINVI) lie on the Extracellular side of the membrane. A helical transmembrane segment spans residues 198–217 (SMTGSNLIVLVIPLLVISIS). The Cytoplasmic segment spans residues 218 to 237 (YIFIVATILRIPSTEGKHKA). The chain crosses the membrane as a helical span at residues 238-258 (FSTCSAHLTVVIIFYGTIFFM). Over 259–277 (YAKPESKASVDSGNEDIIE) the chain is Extracellular. The chain crosses the membrane as a helical span at residues 278–298 (ALISLFYGVMTPMLNPLIYSL). Residues 299–320 (RNKDVKAAVKNILCRKNFSDGK) lie on the Cytoplasmic side of the membrane.

Belongs to the G-protein coupled receptor 1 family.

The protein localises to the cell membrane. Odorant receptor. The sequence is that of Olfactory receptor 13C8 (OR13C8) from Homo sapiens (Human).